The chain runs to 396 residues: Small ribosomal subunit protein uS9m (396 aa).

Position 287 is an N6-acetyllysine (Lys287). Residues 374 to 396 (PRVRERKKPGQEGARRKFTWKKR) are disordered.

The protein belongs to the universal ribosomal protein uS9 family. Component of the mitochondrial small ribosomal subunit (mt-SSU). Mature mammalian 55S mitochondrial ribosomes consist of a small (28S) and a large (39S) subunit. The 28S small subunit contains a 12S ribosomal RNA (12S mt-rRNA) and 30 different proteins. The 39S large subunit contains a 16S rRNA (16S mt-rRNA), a copy of mitochondrial valine transfer RNA (mt-tRNA(Val)), which plays an integral structural role, and 52 different proteins.

The protein resides in the mitochondrion. The polypeptide is Small ribosomal subunit protein uS9m (MRPS9) (Homo sapiens (Human)).